The following is a 222-amino-acid chain: Transmembrane reductase CYB561D2 (222 aa).

The Cytoplasmic portion of the chain corresponds to 2 to 17; sequence ALSVETESHIYRALRT. Positions 14–217 constitute a Cytochrome b561 domain; it reads ALRTVSGAAA…NQVSNAYLYR (204 aa). The chain crosses the membrane as a helical span at residues 18–38; it reads VSGAAAHLVALGFTIFVAVLA. The Lumenal portion of the chain corresponds to 39 to 46; sequence RPGSSLFS. The helical transmembrane segment at 47–67 threads the bilayer; the sequence is WHPVLMSLAFSFLMTEALLVF. His48 serves as a coordination point for heme b. The Cytoplasmic portion of the chain corresponds to 68 to 85; that stretch reads SPESSLLRSLSRKGRARC. Residues His86 and His120 each contribute to the heme b site. The helical transmembrane segment at 86–106 threads the bilayer; sequence HWVLQLLALLCALLGLGLVIL. At 107–122 the chain is on the lumenal side; that stretch reads HKEQLGKAHLATWHGR. The chain crosses the membrane as a helical span at residues 123–143; that stretch reads AGLLAVLWAGLQCSGGVGLLY. The Cytoplasmic portion of the chain corresponds to 144–162; the sequence is PKLLPRWPLAKLKLYHATS. His159 is a binding site for heme b. Residues 163–183 traverse the membrane as a helical segment; that stretch reads GLVGYLLGGASLLLGMCSLWF. Residues 184 to 186 lie on the Lumenal side of the membrane; sequence TAT. Residues 187–207 form a helical membrane-spanning segment; the sequence is VTGGVWYLAVLCPVITSLVIM. The Cytoplasmic segment spans residues 208 to 222; that stretch reads NQVSNAYLYRKRIQP.

Heme b serves as cofactor.

The protein localises to the endoplasmic reticulum membrane. The protein resides in the cytoplasmic vesicle membrane. It carries out the reaction monodehydro-L-ascorbate radical(out) + L-ascorbate(in) = monodehydro-L-ascorbate radical(in) + L-ascorbate(out). The catalysed reaction is Fe(3+)(out) + L-ascorbate(in) = monodehydro-L-ascorbate radical(in) + Fe(2+)(out) + H(+). Transmembrane reductase that may use ascorbate as an electron donor in the cytoplasm and transfer electrons across endoplasmic reticulum membranes to reduce monodehydro-L-ascorbate radical and iron cations Fe(3+) in the lumen of that compartment. The chain is Transmembrane reductase CYB561D2 from Bos taurus (Bovine).